The chain runs to 323 residues: Aldo-keto reductase family 1 member C23-like protein (323 aa).

Residue 20-24 (GFGTY) participates in NADP(+) binding. Residue Lys-31 coordinates substrate. Asp-50 lines the NADP(+) pocket. Catalysis depends on Tyr-55, which acts as the Proton donor. His-117 lines the substrate pocket. Residues 166–167 (SN), Gln-190, 216–222 (YGALGTQ), and 270–280 (KSYNEKRIKEN) contribute to the NADP(+) site.

It belongs to the aldo/keto reductase family. As to quaternary structure, monomer. Detected in endometrium surface epithelium (at protein level). Detected in endometrium.

Its subcellular location is the cytoplasm. Functionally, NADP-dependent oxidoreductase involved in steroid metabolism. May act on various hydroxysteroids. This Equus caballus (Horse) protein is Aldo-keto reductase family 1 member C23-like protein (PGFS).